Reading from the N-terminus, the 278-residue chain is Delta(3,5)-Delta(2,4)-dienoyl-CoA isomerase, peroxisomal (278 aa).

Met-1 carries the post-translational modification N-acetylmethionine. Substrate-binding positions include 69 to 73 (SGIDL) and Gly-128. Residues 276–278 (AKL) carry the Microbody targeting signal motif.

This sequence belongs to the enoyl-CoA hydratase/isomerase family. As to expression, expressed in roots, leaves, stems and flowers.

Its subcellular location is the peroxisome. It catalyses the reaction a (3E,5Z)-dienoyl-CoA = a (2E,4E)-(5,6-saturated)-dienoyl-CoA. The protein operates within lipid metabolism; fatty acid beta-oxidation. Its function is as follows. Converts 3,5-dienoyl-CoAs to the corresponding 2,4-dienoyl-CoAs. Involved in degradation of unsaturated fatty acids. The sequence is that of Delta(3,5)-Delta(2,4)-dienoyl-CoA isomerase, peroxisomal from Arabidopsis thaliana (Mouse-ear cress).